We begin with the raw amino-acid sequence, 143 residues long: Large ribosomal subunit protein uL11 (143 aa).

The protein belongs to the universal ribosomal protein uL11 family. Part of the ribosomal stalk of the 50S ribosomal subunit. Interacts with L10 and the large rRNA to form the base of the stalk. L10 forms an elongated spine to which L12 dimers bind in a sequential fashion forming a multimeric L10(L12)X complex. In terms of processing, one or more lysine residues are methylated.

Functionally, forms part of the ribosomal stalk which helps the ribosome interact with GTP-bound translation factors. This chain is Large ribosomal subunit protein uL11, found in Bifidobacterium longum (strain DJO10A).